The chain runs to 107 residues: Flagellar hook-basal body complex protein FliE (107 aa).

Belongs to the FliE family.

The protein resides in the bacterial flagellum basal body. This Sodalis glossinidius (strain morsitans) protein is Flagellar hook-basal body complex protein FliE.